The primary structure comprises 507 residues: Lysine--tRNA ligase (507 aa).

Mg(2+)-binding residues include E416 and E423.

This sequence belongs to the class-II aminoacyl-tRNA synthetase family. Homodimer. The cofactor is Mg(2+).

It is found in the cytoplasm. It carries out the reaction tRNA(Lys) + L-lysine + ATP = L-lysyl-tRNA(Lys) + AMP + diphosphate. The protein is Lysine--tRNA ligase of Hahella chejuensis (strain KCTC 2396).